Here is a 380-residue protein sequence, read N- to C-terminus: Succinyl-diaminopimelate desuccinylase (380 aa).

Residue H71 participates in Zn(2+) binding. D73 is an active-site residue. D104 lines the Zn(2+) pocket. E136 (proton acceptor) is an active-site residue. Zn(2+) contacts are provided by E137, E166, and H351.

Belongs to the peptidase M20A family. DapE subfamily. As to quaternary structure, homodimer. It depends on Zn(2+) as a cofactor. Requires Co(2+) as cofactor.

The catalysed reaction is N-succinyl-(2S,6S)-2,6-diaminopimelate + H2O = (2S,6S)-2,6-diaminopimelate + succinate. It functions in the pathway amino-acid biosynthesis; L-lysine biosynthesis via DAP pathway; LL-2,6-diaminopimelate from (S)-tetrahydrodipicolinate (succinylase route): step 3/3. Functionally, catalyzes the hydrolysis of N-succinyl-L,L-diaminopimelic acid (SDAP), forming succinate and LL-2,6-diaminopimelate (DAP), an intermediate involved in the bacterial biosynthesis of lysine and meso-diaminopimelic acid, an essential component of bacterial cell walls. The chain is Succinyl-diaminopimelate desuccinylase from Ehrlichia canis (strain Jake).